Consider the following 241-residue polypeptide: Folate receptor alpha (241 aa).

A signal peptide spans 1 to 19 (MAWQMTQLLLLALVAAAWG). 8 disulfides stabilise this stretch: cysteine 36-cysteine 64, cysteine 56-cysteine 104, cysteine 65-cysteine 108, cysteine 88-cysteine 174, cysteine 95-cysteine 145, cysteine 134-cysteine 208, cysteine 138-cysteine 188, and cysteine 151-cysteine 168. The N-linked (GlcNAc...) asparagine glycan is linked to asparagine 68. Folate contacts are provided by residues aspartate 102, tyrosine 106, 123–127 (WRKER), 156–161 (HKGWNW), and serine 195. Asparagine 160 carries N-linked (GlcNAc...) asparagine glycosylation. A lipid anchor (GPI-anchor amidated serine) is attached at serine 234. The propeptide at 235-241 (GSTPQGI) is removed in mature form.

It belongs to the folate receptor family. In terms of processing, the secreted form is derived from the membrane-bound form either by cleavage of the GPI anchor, or/and by proteolysis catalyzed by a metalloprotease. In terms of tissue distribution, detected in milk (at protein level).

The protein resides in the cell membrane. It localises to the apical cell membrane. Its subcellular location is the basolateral cell membrane. The protein localises to the secreted. It is found in the cytoplasmic vesicle. The protein resides in the clathrin-coated vesicle. It localises to the endosome. Functionally, binds to folate and reduced folic acid derivatives and mediates delivery of 5-methyltetrahydrofolate and folate analogs into the interior of cells. Has high affinity for folate and folic acid analogs at neutral pH. Exposure to slightly acidic pH after receptor endocytosis triggers a conformation change that strongly reduces its affinity for folates and mediates their release. Required for normal embryonic development and normal cell proliferation. This is Folate receptor alpha (FOLR1) from Bos taurus (Bovine).